We begin with the raw amino-acid sequence, 635 residues long: Threonine--tRNA ligase (635 aa).

Residues 1–61 (MITVRLPDGS…EKDSDLAIIT (61 aa)) form the TGS domain. Positions 242–533 (DHRKLGKQLD…LIEHYAGALP (292 aa)) are catalytic. Zn(2+) is bound by residues C333, H384, and H510.

This sequence belongs to the class-II aminoacyl-tRNA synthetase family. In terms of assembly, homodimer. It depends on Zn(2+) as a cofactor.

It is found in the cytoplasm. The enzyme catalyses tRNA(Thr) + L-threonine + ATP = L-threonyl-tRNA(Thr) + AMP + diphosphate + H(+). Catalyzes the attachment of threonine to tRNA(Thr) in a two-step reaction: L-threonine is first activated by ATP to form Thr-AMP and then transferred to the acceptor end of tRNA(Thr). Also edits incorrectly charged L-seryl-tRNA(Thr). This chain is Threonine--tRNA ligase, found in Janthinobacterium sp. (strain Marseille) (Minibacterium massiliensis).